Here is a 165-residue protein sequence, read N- to C-terminus: Small ribosomal subunit protein eS10 (165 aa).

Position 12 is a phosphotyrosine (Tyr12). A disordered region spans residues 92-165; that stretch reads ATLRRSRPET…FGRGRGQPPQ (74 aa). Residues 97-128 are compositionally biased toward basic and acidic residues; sequence SRPETGRPRPKGLEGERPARLTRGEADRDTYR. Glycyl lysine isopeptide (Lys-Gly) (interchain with G-Cter in ubiquitin) cross-links involve residues Lys138 and Lys139. A Phosphoserine modification is found at Ser146. Position 153 is an omega-N-methylarginine (Arg153). Over residues 154-165 the composition is skewed to gly residues; the sequence is GGFGRGRGQPPQ. 2 positions are modified to symmetric dimethylarginine: Arg158 and Arg160.

The protein belongs to the eukaryotic ribosomal protein eS10 family. Component of the small ribosomal subunit. The methylated form interacts with NPM1. Post-translationally, methylated by PRMT5. Methylation is necessary for its interaction with NPS1, its localization in the granular component (GC) region of the nucleolus, for the proper assembly of ribosomes, protein synthesis and optimal cell proliferation. In terms of processing, monoubiquitinated by ZNF598 when a ribosome has stalled during translation of poly(A) sequences, leading to preclude synthesis of a long poly-lysine tail and initiate the ribosome quality control (RQC) pathway to degrade the potentially detrimental aberrant nascent polypeptide. Deubiquitinated by OTUD3 and USP21, antagonizing ZNF598 activity. Deubiquitinated by OTUD1, antagonizing ZNF598 activity and stimulating formation of polysomes: deubiquitination by OTUD1 promotes stability and translation of a subset mRNAs with a high abundance of rare codons can limit the translation rate. Deubiquitinated by USP10.

Its subcellular location is the cytoplasm. The protein resides in the nucleus. The protein localises to the nucleolus. In terms of biological role, component of the 40S ribosomal subunit. The ribosome is a large ribonucleoprotein complex responsible for the synthesis of proteins in the cell. The sequence is that of Small ribosomal subunit protein eS10 (RPS10) from Oryctolagus cuniculus (Rabbit).